A 760-amino-acid chain; its full sequence is MRYNQFSYIPTSLERAAEELKELGFDLDLQKTAKANLESFLRKLFFHYPDSDYPLSHLIAKNDMDALSFFQSEQELSKEVFDLLALQVLGFIPGVDFTEADAFLDKLAFPIHFDETEIIKHIHHLLATRCKSGMTLIDDLVSQGMLTMDNDYHFFNGKSLATFDTSQLIREVVYVEAPLDTDQDGQLDLIKVNIIRPQSQKPLPTLMTPSPYHQGINEVANDKKLYRMEKELVVKKRRQITVEDRDFIPLETQPCKLPIGQNLESFSYINSYSLNDYFLARGFANIYVSGVGTAGSTGFMTSGDYAQIESFKAVIDWLNGRATAYTSHSKTHQVRADWANGLVCTTGKSYLGTMSTGLATTGVDGLAMIIAESAISSWYNYYRENGLVCSPGGYPGEDLDVLTELTYSRNLLAGDYLRHNDRYQELLNQQSQALDRQSGDYNQFWHDRNYLKNAHQIKCDVVYTHGLQDWNVKPRQVYEIFNALPSTINKHLFLHQGEHVYMHNWQSIDFRESMNALLCQKLLGLANDFSLPEMIWQDNTCLQNWQERKVFGTSTIKELDLGQELLLIDNHYGEDEFKAYGKDFRAFKAALFEGKANQALVDILLEEDLPINGEIVLQLKVKSSENKGLLSAQILDYGKKKRLGDLPIALTQSSIDNGQNFSRESLKELLFREDSYRVISKGFMNLQNRNNLSSIETIPNNKWMTVRLPLQPTIYHLEKGDTLRVILYTTDFEHTVRDNSNYALTIDLSQSQLIVPIASN.

Residues serine 349, aspartate 469, and histidine 499 each act as charge relay system in the active site.

Belongs to the peptidase S15 family. In terms of assembly, homodimer.

The protein resides in the cytoplasm. The enzyme catalyses Hydrolyzes Xaa-Pro-|- bonds to release unblocked, N-terminal dipeptides from substrates including Ala-Pro-|-p-nitroanilide and (sequentially) Tyr-Pro-|-Phe-Pro-|-Gly-Pro-|-Ile.. In terms of biological role, removes N-terminal dipeptides sequentially from polypeptides having unsubstituted N-termini provided that the penultimate residue is proline. The polypeptide is Xaa-Pro dipeptidyl-peptidase (Streptococcus pyogenes serotype M6 (strain ATCC BAA-946 / MGAS10394)).